The sequence spans 32 residues: HEERVCPRILMKCKKDSDCLAECVCLEHGYCG.

Intrachain disulfides connect C6–C23, C13–C25, and C19–C31.

It belongs to the protease inhibitor I7 (squash-type serine protease inhibitor) family.

It is found in the secreted. Functionally, inhibits trypsin. This is Trypsin inhibitor 4 from Cucurbita maxima (Pumpkin).